The primary structure comprises 509 residues: MEEYQVFXVYLELDRSRQQDFLYPLIFREYIYGLAYGHDLNRPILMENIGYDNKSSLLIAKRLIIRMYQQNHFIISANDSNKNQFLGYNNNLYSQIISEGFAVVVEIPFSLQLSYSLEEAEIVKSYKNFRSIHSIFPFFEEKFSYLKYVSDVRIPYPIHLEISVQTLRYWVKDAPFFHLLRLFLYEYCNSIITPKKPISTFSKRKSNPRIFLFLYNFYVCEYESIFLFLRNKSSHLRLTSFSVLFERIYFYAKIEHLVEVFTGDYSSTLSFFKDLFIHYVRYQGKSILASKNVPLLMNKWKYYLIHLWQCHFDVWSQPGTIHINLLYKHSHFFXGYFSNVQLNLSVVRSQMLENSFLIEIVMKKFHTKVPIISLIRSLAKAKFCNVLGHPISNPVWADSSDFDIIDRFLRICRNLSHYYNGSSKKXSLYRIKYILRLSCIKTLARKHKSTVCAFLKILGSEELLEEFFTEEEEILSLIFPRTSYTLKRLYRGRIWYLDIIFSNDLVNRE.

The protein belongs to the intron maturase 2 family. MatK subfamily.

It localises to the plastid. Its subcellular location is the chloroplast. Its function is as follows. Usually encoded in the trnK tRNA gene intron. Probably assists in splicing its own and other chloroplast group II introns. This Vatairea macrocarpa protein is Maturase K.